The primary structure comprises 262 residues: Tryptophan synthase alpha chain (262 aa).

Catalysis depends on proton acceptor residues Glu48 and Asp59.

This sequence belongs to the TrpA family. As to quaternary structure, tetramer of two alpha and two beta chains.

The enzyme catalyses (1S,2R)-1-C-(indol-3-yl)glycerol 3-phosphate + L-serine = D-glyceraldehyde 3-phosphate + L-tryptophan + H2O. It participates in amino-acid biosynthesis; L-tryptophan biosynthesis; L-tryptophan from chorismate: step 5/5. The alpha subunit is responsible for the aldol cleavage of indoleglycerol phosphate to indole and glyceraldehyde 3-phosphate. In Helicobacter pylori (strain G27), this protein is Tryptophan synthase alpha chain.